A 549-amino-acid chain; its full sequence is Chaperonin GroEL (549 aa).

ATP-binding positions include 30–33 (TLGP), lysine 51, 87–91 (DGTTT), glycine 415, and aspartate 496.

This sequence belongs to the chaperonin (HSP60) family. As to quaternary structure, forms a cylinder of 14 subunits composed of two heptameric rings stacked back-to-back. Interacts with the co-chaperonin GroES.

It localises to the cytoplasm. The catalysed reaction is ATP + H2O + a folded polypeptide = ADP + phosphate + an unfolded polypeptide.. Together with its co-chaperonin GroES, plays an essential role in assisting protein folding. The GroEL-GroES system forms a nano-cage that allows encapsulation of the non-native substrate proteins and provides a physical environment optimized to promote and accelerate protein folding. The chain is Chaperonin GroEL from Prosthecochloris aestuarii (strain DSM 271 / SK 413).